Here is a 351-residue protein sequence, read N- to C-terminus: Transmembrane protein 185-like (351 aa).

Transmembrane regions (helical) follow at residues 16 to 36 (LIYA…DGII), 41 to 61 (WAVF…ASVG), 81 to 101 (FKAM…EVLV), 113 to 133 (WLLV…ACVW), 154 to 174 (FIFI…VVCV), 178 to 198 (ILMS…VLFL), 212 to 232 (ITMA…EILL), and 244 to 264 (YVPV…TTFG).

It belongs to the TMEM185 family.

The protein resides in the membrane. The protein is Transmembrane protein 185-like of Danio rerio (Zebrafish).